A 105-amino-acid polypeptide reads, in one-letter code: Large ribosomal subunit protein bL21 (105 aa).

It belongs to the bacterial ribosomal protein bL21 family. As to quaternary structure, part of the 50S ribosomal subunit. Contacts protein L20.

Its function is as follows. This protein binds to 23S rRNA in the presence of protein L20. This Methylobacterium nodulans (strain LMG 21967 / CNCM I-2342 / ORS 2060) protein is Large ribosomal subunit protein bL21.